The primary structure comprises 250 residues: Electron transport regulator A (250 aa).

One can recognise an HTH crp-type domain in the interval 164–237 (KNAEERLAAF…GKYIIIVDHH (74 aa)). The segment at residues 197–216 (RGDIGNYLGLTVETISRLLG) is a DNA-binding region (H-T-H motif).

As to quaternary structure, monomer.

Regulates anaerobic growth on fumarate, nitrite, Fe(3+), TMAO, DMSO, thiosulfate and sulfite, but not on nitrate nor Mn(4+). This is Electron transport regulator A (etrA) from Shewanella oneidensis (strain ATCC 700550 / JCM 31522 / CIP 106686 / LMG 19005 / NCIMB 14063 / MR-1).